Here is a 712-residue protein sequence, read N- to C-terminus: MAEYTRSISFYGREIDINIGLMAPQAGCGVWLTSGETSVLVTATRQAGRAGVDFLPLLVDYEERLYAAGRIPGGYLRREGRPPERATLISRLIDRPLRPLFPEWLRDDVQIVATTLSVDDKVPPDVLCILGASLAIHSARIPFNGPVAAVRVGLVKDEFIINPTYAEIEAGDLDLVVAGCADGVIMVEAGANQLPEKDVVEAIEFGFEAVQELLKAQQQVFADLNITPVELPPPPQNEELVAFVAEHAQEEIRSVLRQFLDKTSREQQLEAIKAKLEAQIQARPEGDPLRLYLLENPKELDNQFKALTKKLMRQQILQEGVRVDGRKLDEVRPVSCRVGLIPRVHGSALFNRGLTQVLSITTLGTPGDAQELDDLHPVDEKRYMHHYNFPGFSVGEVRPSRSPGRREIGHGALAERALVPVLPKEEEFPYVVRVVSEVLSSNGSTSMASVCGSTLSLMDAGVPIKAPVSGVAMGLIKEGDEVRILTDIQGIEDFLGDMDFKVAGTRAGITALQMDMKITGITVDVVEKALLQAKAGRDYILDKMLEVLPAPRPQLAKTAPRLLTFKVDPEDIGKIIGPGGKMVRSITEATGAKVDISDDGTITVSSSVGGQAEAARAMIENLVRRVEEGQVYLGKVTRIIPIGAFVEFLPGKEGMIHISQLAEYRVSRVEDEIAVADEVVVKVRSIDHKGRVNLTRLGISPEEAARVRNHHP.

Aspartate 493 and aspartate 499 together coordinate Mg(2+). The 60-residue stretch at 560–619 (PRLLTFKVDPEDIGKIIGPGGKMVRSITEATGAKVDISDDGTITVSSSVGGQAEAARAMI) folds into the KH domain. The region spanning 629–697 (GQVYLGKVTR…HKGRVNLTRL (69 aa)) is the S1 motif domain.

The protein belongs to the polyribonucleotide nucleotidyltransferase family. Mg(2+) serves as cofactor.

It is found in the cytoplasm. It carries out the reaction RNA(n+1) + phosphate = RNA(n) + a ribonucleoside 5'-diphosphate. Involved in mRNA degradation. Catalyzes the phosphorolysis of single-stranded polyribonucleotides processively in the 3'- to 5'-direction. The protein is Polyribonucleotide nucleotidyltransferase of Synechococcus sp. (strain JA-3-3Ab) (Cyanobacteria bacterium Yellowstone A-Prime).